The sequence spans 159 residues: Transcription elongation factor GreA (159 aa).

It belongs to the GreA/GreB family.

In terms of biological role, necessary for efficient RNA polymerase transcription elongation past template-encoded arresting sites. The arresting sites in DNA have the property of trapping a certain fraction of elongating RNA polymerases that pass through, resulting in locked ternary complexes. Cleavage of the nascent transcript by cleavage factors such as GreA or GreB allows the resumption of elongation from the new 3'terminus. GreA releases sequences of 2 to 3 nucleotides. The protein is Transcription elongation factor GreA of Buchnera aphidicola subsp. Baizongia pistaciae (strain Bp).